Here is a 177-residue protein sequence, read N- to C-terminus: UPF0316 protein STH2077 (177 aa).

Helical transmembrane passes span 9 to 29 and 41 to 61; these read AALDLLIIFLAQATYVSVNTV and LASAISFFEVILWVYALGLVV.

This sequence belongs to the UPF0316 family.

The protein localises to the cell membrane. In Symbiobacterium thermophilum (strain DSM 24528 / JCM 14929 / IAM 14863 / T), this protein is UPF0316 protein STH2077.